The primary structure comprises 303 residues: Small ribosomal subunit protein uS2 (303 aa).

Residues 258–303 (ATLRENAVVTENEVKKTDEEEGASSEAARADAQNEEAVAKPGEEVE) form a disordered region. Over residues 294–303 (AVAKPGEEVE) the composition is skewed to basic and acidic residues.

It belongs to the universal ribosomal protein uS2 family.

The chain is Small ribosomal subunit protein uS2 from Bifidobacterium animalis subsp. lactis (strain AD011).